Consider the following 275-residue polypeptide: 2,3,4,5-tetrahydropyridine-2,6-dicarboxylate N-succinyltransferase (275 aa).

Substrate contacts are provided by Arg104 and Asp141.

This sequence belongs to the transferase hexapeptide repeat family. Homotrimer.

The protein localises to the cytoplasm. It catalyses the reaction (S)-2,3,4,5-tetrahydrodipicolinate + succinyl-CoA + H2O = (S)-2-succinylamino-6-oxoheptanedioate + CoA. Its pathway is amino-acid biosynthesis; L-lysine biosynthesis via DAP pathway; LL-2,6-diaminopimelate from (S)-tetrahydrodipicolinate (succinylase route): step 1/3. The chain is 2,3,4,5-tetrahydropyridine-2,6-dicarboxylate N-succinyltransferase from Haemophilus influenzae (strain 86-028NP).